We begin with the raw amino-acid sequence, 957 residues long: Outer kinetochore KNL1 complex subunit knl-1 (957 aa).

Copy 1 of the repeat occupies 87–90 (MDIT). The interval 87 to 393 (MDITGLNSTP…NFDDVAMDIT (307 aa)) is 8 X 4 AA repeats of M-[D/E]-[I/L/M]-[S/T]. Positions 89-111 (ITGLNSTPVTPKTQTPFNGSMDM) are disordered. Polar residues predominate over residues 91-106 (GLNSTPVTPKTQTPFN). 7 consecutive repeat copies span residues 109 to 112 (MDMS), 206 to 209 (MDIT), 251 to 254 (MDIT), 282 to 285 (MDLT), 326 to 329 (MEMT), 367 to 370 (MEMT), and 390 to 393 (MDIT). The tract at residues 476-504 (SLQQSSMRMSTTITEDVTASKNPESSTIS) is disordered. Residues 830–950 (KFAKESNVEI…RKKKEEMVER (121 aa)) are a coiled coil.

As to quaternary structure, component of the KNL1 complex composed of knl-1 and kbp-5. Part of the ten-subunit outer kinetochore KMN network that includes the KNL1, MIS12 and NDC80 complexes. Interacts with the protein phosphatase 1 (PP1) catalytic subunit gsp-1; the interaction is direct. Interacts with the protein phosphatase 1 (PP1) catalytic subunit gsp-2; the interaction is direct. Interacts with the MIS12 complex subunits kbp-1, kbp-2 and mis-12. Interacts with the NDC80 complex components ndc-80 and him-10. Interacts with knl-3. Interacts with kbp-3. Interacts with kbp-4. Interacts with kbp-5.

It is found in the cytoplasm. It localises to the cell cortex. Its subcellular location is the chromosome. The protein localises to the centromere. The protein resides in the kinetochore. Functionally, acts as a component of the outer kinetochore KNL1 complex that serves as a docking point for spindle assembly checkpoint components and mediates microtubule-kinetochore interactions. Kinetochores, consisting of a centromere-associated inner segment and a microtubule-contacting outer segment, play a crucial role in chromosome segregation by mediating the physical connection between centromeric DNA and spindle microtubules. The outer kinetochore is made up of the ten-subunit KMN network, comprising the MIS12, NDC80 and KNL1 complexes, and auxiliary microtubule-associated components; together they connect the outer kinetochore with the inner kinetochore, bind microtubules, and mediate interactions with mitotic checkpoint proteins that delay anaphase until chromosomes are bioriented on the spindle. Binds the protein phosphatase 1 catalytic subunits gsp-1 and gsp-2, which has a role in delaying formation of load-bearing kinetochore-microtubule attachments. Required for the recruitment of spindle-assembly checkpoint components bub-1 and mdf-1/2 to unattached kinetochores. Binds microtubules which plays a role in silencing of the spindle assembly checkpoint, but not the formation of load-bearing microtubule-kinetochore attachments. Has a role in the correct localization of the spindly-like protein spdl-1 and the RZZ complex that is composed of rod-1, czw-1 and zwl-1 to kinetochores. The chain is Outer kinetochore KNL1 complex subunit knl-1 from Caenorhabditis briggsae.